The primary structure comprises 417 residues: Serine hydroxymethyltransferase (417 aa).

Residues L122 and 126–128 (GHL) contribute to the (6S)-5,6,7,8-tetrahydrofolate site. Residue K230 is modified to N6-(pyridoxal phosphate)lysine. 355–357 (SPF) is a (6S)-5,6,7,8-tetrahydrofolate binding site.

It belongs to the SHMT family. Homodimer. Pyridoxal 5'-phosphate is required as a cofactor.

The protein resides in the cytoplasm. It catalyses the reaction (6R)-5,10-methylene-5,6,7,8-tetrahydrofolate + glycine + H2O = (6S)-5,6,7,8-tetrahydrofolate + L-serine. It functions in the pathway one-carbon metabolism; tetrahydrofolate interconversion. It participates in amino-acid biosynthesis; glycine biosynthesis; glycine from L-serine: step 1/1. In terms of biological role, catalyzes the reversible interconversion of serine and glycine with tetrahydrofolate (THF) serving as the one-carbon carrier. This reaction serves as the major source of one-carbon groups required for the biosynthesis of purines, thymidylate, methionine, and other important biomolecules. Also exhibits THF-independent aldolase activity toward beta-hydroxyamino acids, producing glycine and aldehydes, via a retro-aldol mechanism. The chain is Serine hydroxymethyltransferase from Francisella tularensis subsp. tularensis (strain FSC 198).